A 62-amino-acid chain; its full sequence is Sperm protamine P1 (62 aa).

Residues 1-62 form a disordered region; that stretch reads MARYRHSRSR…RYSRRGRRRY (62 aa).

This sequence belongs to the protamine P1 family. In terms of tissue distribution, testis.

The protein localises to the nucleus. The protein resides in the chromosome. Its function is as follows. Protamines substitute for histones in the chromatin of sperm during the haploid phase of spermatogenesis. They compact sperm DNA into a highly condensed, stable and inactive complex. The chain is Sperm protamine P1 (PRM1) from Trichosurus vulpecula (Brush-tailed possum).